The sequence spans 147 residues: Ubiquitin-conjugating enzyme E2 D2B (147 aa).

The region spanning 1–147 (MALKRIHKEL…AREWTQKYAM (147 aa)) is the UBC core domain. The active-site Glycyl thioester intermediate is C85.

It belongs to the ubiquitin-conjugating enzyme family. In terms of assembly, interacts with CNOT4 (via RING domain). Testis-specific. Mainly expressed in the round spermatids (at protein level).

It carries out the reaction S-ubiquitinyl-[E1 ubiquitin-activating enzyme]-L-cysteine + [E2 ubiquitin-conjugating enzyme]-L-cysteine = [E1 ubiquitin-activating enzyme]-L-cysteine + S-ubiquitinyl-[E2 ubiquitin-conjugating enzyme]-L-cysteine.. The protein operates within protein modification; protein ubiquitination. Catalyzes the covalent attachment of ubiquitin to other proteins. Mediates the selective degradation of short-lived and abnormal proteins. Functions in the E6/E6-AP-induced ubiquitination of p53/TP53. Mediates ubiquitination of PEX5 and SQSTM1 and autoubiquitination of STUB1 and TRAF6. Involved in the signal-induced conjugation and subsequent degradation of NFKBIA, FBXW2-mediated GCM1 ubiquitination and degradation, MDM2-dependent degradation of p53/TP53 and the activation of MAVS in the mitochondria by RIGI in response to viral infection Plays a role in early maturation of the testis. This chain is Ubiquitin-conjugating enzyme E2 D2B (Ube2d2b), found in Rattus norvegicus (Rat).